Reading from the N-terminus, the 518-residue chain is Trigger factor (518 aa).

Residues 170–255 form the PPIase FKBP-type domain; sequence GDVVVIDFVG…VKGLESPQEA (86 aa). Residues 447-518 are disordered; it reads EAPAKPAKKA…AKKAAAKKDA (72 aa). 2 stretches are compositionally biased toward basic residues: residues 452-468 and 501-518; these read PAKK…KKAA and PAAK…KKDA.

It belongs to the FKBP-type PPIase family. Tig subfamily.

It localises to the cytoplasm. It catalyses the reaction [protein]-peptidylproline (omega=180) = [protein]-peptidylproline (omega=0). Involved in protein export. Acts as a chaperone by maintaining the newly synthesized protein in an open conformation. Functions as a peptidyl-prolyl cis-trans isomerase. This chain is Trigger factor, found in Maricaulis maris (strain MCS10) (Caulobacter maris).